We begin with the raw amino-acid sequence, 442 residues long: Microfibrillar-associated protein 1 (442 aa).

Disordered regions lie at residues 1 to 34 (MSAPSALVKQPPIQSTAGACPSRNEKGRAVYGEG) and 113 to 203 (EVVS…PRLK). Acidic residues-rich tracts occupy residues 134-148 (DTSEEEEEEIDDEEI) and 181-198 (ESELESEYEEYTDSEDEM).

Belongs to the MFAP1 family. Component of the spliceosome B complex. Interacts with PRPF38A (via N-terminal interaction domain). In terms of tissue distribution, widely expressed.

The protein resides in the nucleus. Involved in pre-mRNA splicing as a component of the spliceosome. The chain is Microfibrillar-associated protein 1 from Gallus gallus (Chicken).